Here is a 240-residue protein sequence, read N- to C-terminus: Sialidase 85-1.2 (240 aa).

The span at 127 to 142 shows a compositional bias: acidic residues; sequence DDDDGGDDDDEEDSQE. 2 disordered regions span residues 127-158 and 221-240; these read DDDDGGDDDDEEDSQEESSPKESSPEKIGKKP and HRGGQLWGEPPIPNMRQRDA. The span at 144-155 shows a compositional bias: basic and acidic residues; that stretch reads SSPKESSPEKIG.

The protein belongs to the glycosyl hydrolase 33 family.

It catalyses the reaction Hydrolysis of alpha-(2-&gt;3)-, alpha-(2-&gt;6)-, alpha-(2-&gt;8)- glycosidic linkages of terminal sialic acid residues in oligosaccharides, glycoproteins, glycolipids, colominic acid and synthetic substrates.. In terms of biological role, developmentally regulated neuraminidase implicated in parasite invasion of cells. May contribute to the pathology during T.cruzi infection by cleaving sialic acid from cells of the immune system. The polypeptide is Sialidase 85-1.2 (SA85-1.2) (Trypanosoma cruzi).